The sequence spans 367 residues: Teichoic acid glycerol-phosphate primase (367 aa).

Belongs to the CDP-glycerol glycerophosphotransferase family.

It is found in the cell membrane. The enzyme catalyses N-acetyl-beta-D-mannosaminyl-(1-&gt;4)-N-acetyl-alpha-D-glucosaminyl di-trans,octa-cis-undecaprenyl diphosphate + CDP-glycerol = 4-O-[(2R)-glycerylphospho]-N-acetyl-beta-D-mannosaminyl-(1-&gt;4)-N-acetyl-alpha-D-glucosaminyl di-trans,octa-cis-undecaprenyl diphosphate + CMP + H(+). It functions in the pathway cell wall biogenesis; poly(ribitol phosphate) teichoic acid biosynthesis. Its function is as follows. Catalyzes the addition of a single glycerol phosphate residue to the prenoldiphosphate-linked disaccharide. The chain is Teichoic acid glycerol-phosphate primase (tarB) from Staphylococcus aureus (strain NCTC 8325 / PS 47).